A 546-amino-acid polypeptide reads, in one-letter code: Chaperonin GroEL 2 (546 aa).

ATP-binding positions include 30–33, lysine 51, 87–91, glycine 415, 479–481, and aspartate 495; these read TLGP, DGTTT, and NAA. Residues 524-546 form a disordered region; sequence APKDAPPAAPAGVPGAGGPGFDF. Residues 537 to 546 are compositionally biased toward gly residues; sequence PGAGGPGFDF.

This sequence belongs to the chaperonin (HSP60) family. In terms of assembly, forms a cylinder of 14 subunits composed of two heptameric rings stacked back-to-back. Interacts with the co-chaperonin GroES.

The protein resides in the cytoplasm. It catalyses the reaction ATP + H2O + a folded polypeptide = ADP + phosphate + an unfolded polypeptide.. Functionally, together with its co-chaperonin GroES, plays an essential role in assisting protein folding. The GroEL-GroES system forms a nano-cage that allows encapsulation of the non-native substrate proteins and provides a physical environment optimized to promote and accelerate protein folding. This is Chaperonin GroEL 2 from Burkholderia pseudomallei (strain 1710b).